The sequence spans 367 residues: tRNA pseudouridine synthase D (367 aa).

The active-site Nucleophile is the aspartate 78. The TRUD domain occupies 153 to 300; sequence GVPNYFGEQR…KQERRRIRLT (148 aa).

Belongs to the pseudouridine synthase TruD family.

The catalysed reaction is uridine(13) in tRNA = pseudouridine(13) in tRNA. Functionally, responsible for synthesis of pseudouridine from uracil-13 in transfer RNAs. This chain is tRNA pseudouridine synthase D, found in Colwellia psychrerythraea (strain 34H / ATCC BAA-681) (Vibrio psychroerythus).